The primary structure comprises 197 residues: Xanthine phosphoribosyltransferase (197 aa).

Leu-20 and Thr-27 together coordinate xanthine. 128–132 provides a ligand contact to 5-phospho-alpha-D-ribose 1-diphosphate; sequence ANGQA. Residue Lys-156 participates in xanthine binding.

The protein belongs to the purine/pyrimidine phosphoribosyltransferase family. Xpt subfamily. In terms of assembly, homodimer.

The protein localises to the cytoplasm. The enzyme catalyses XMP + diphosphate = xanthine + 5-phospho-alpha-D-ribose 1-diphosphate. The protein operates within purine metabolism; XMP biosynthesis via salvage pathway; XMP from xanthine: step 1/1. Functionally, converts the preformed base xanthine, a product of nucleic acid breakdown, to xanthosine 5'-monophosphate (XMP), so it can be reused for RNA or DNA synthesis. This is Xanthine phosphoribosyltransferase from Lactococcus lactis subsp. cremoris (strain SK11).